The sequence spans 514 residues: Glutathione-binding protein GsiB (514 aa).

The first 26 residues, 1–26 (MARAVHRSGLVALGIATALMASCAFA), serve as a signal peptide directing secretion.

It belongs to the bacterial solute-binding protein 5 family. In terms of assembly, the complex is composed of two ATP-binding proteins (GsiA), two transmembrane proteins (GsiC and GsiD) and a solute-binding protein (GsiB).

The protein localises to the periplasm. Functionally, part of the ABC transporter complex GsiABCD involved in glutathione import. Binds glutathione. This Shigella flexneri serotype 5b (strain 8401) protein is Glutathione-binding protein GsiB.